Consider the following 297-residue polypeptide: Carbamate kinase (297 aa).

This sequence belongs to the carbamate kinase family.

Its subcellular location is the cytoplasm. It carries out the reaction hydrogencarbonate + NH4(+) + ATP = carbamoyl phosphate + ADP + H2O + H(+). The enzyme catalyses carbamate + ATP = carbamoyl phosphate + ADP. It catalyses the reaction hydrogencarbonate + NH4(+) = carbamate + H2O + H(+). It participates in nitrogen metabolism; (S)-allantoin degradation. Its function is as follows. Kinase involved in the anaerobic nitrogen utilization via the assimilation of allantoin. Catalyzes the transfer of a phosphate group from carbamoyl phosphate to ADP to produce ATP and leave carbamate, which spontaneously hydrolyzes to ammonia and hydrogencarbonate. In Escherichia coli O6:H1 (strain CFT073 / ATCC 700928 / UPEC), this protein is Carbamate kinase.